A 361-amino-acid polypeptide reads, in one-letter code: Homocitrate synthase (361 aa).

The Pyruvate carboxyltransferase domain maps to 1–249 (MILDSTLREG…VKKYRLDKLY (249 aa)). Position 8 (Arg-8) interacts with 2-oxoglutarate. Mg(2+) is bound at residue Glu-9. 2-oxoglutarate contacts are provided by His-68, Arg-128, and Thr-162. His-188 and His-190 together coordinate Mg(2+). His-282 acts as the Proton acceptor in catalysis.

The protein belongs to the alpha-IPM synthase/homocitrate synthase family. Homocitrate synthase LYS20/LYS21 subfamily. The cofactor is Mg(2+). Requires Mn(2+) as cofactor.

The enzyme catalyses acetyl-CoA + 2-oxoglutarate + H2O = (2R)-homocitrate + CoA + H(+). It functions in the pathway amino-acid biosynthesis; L-lysine biosynthesis via AAA pathway; L-alpha-aminoadipate from 2-oxoglutarate: step 1/5. Catalyzes the aldol-type condensation of 2-oxoglutarate with acetyl-CoA to yield homocitrate. Carries out the first step of the alpha-aminoadipate (AAA) lysine biosynthesis pathway. In Pyrococcus horikoshii (strain ATCC 700860 / DSM 12428 / JCM 9974 / NBRC 100139 / OT-3), this protein is Homocitrate synthase.